We begin with the raw amino-acid sequence, 121 residues long: Estrogen receptor (121 aa).

The 121-residue stretch at 1 to 121 folds into the NR LBD domain; sequence LFAPNLLLDR…IRHMSNKGME (121 aa). Cys-45 carries the S-palmitoyl cysteine lipid modification.

The protein belongs to the nuclear hormone receptor family. NR3 subfamily. Binds DNA as a homodimer. Can form a heterodimer with ESR2. Interacts with coactivator NCOA5. Interacts with NCOA7; the interaction is ligand-inducible. Interacts with AKAP13, CUEDC2, HEXIM1, KDM5A, MAP1S, PELP1, SMARD1, and UBE1C. Interacts with MUC1; the interaction is stimulated by 7 beta-estradiol (E2) and enhances ERS1-mediated transcription. Interacts with DNTTIP2, and UIMC1. Interacts with KMT2D/MLL2. Interacts with ATAD2; the interaction is enhanced by estradiol. Interacts with KIF18A and LDB1. Interacts with RLIM (via its C-terminus). Interacts with MACROD1. Interacts with SH2D4A and PLCG. Interacts with SH2D4A; the interaction blocks binding to PLCG and inhibits estrogen-induced cell proliferation. Interacts with DYNLL1. Interacts with CCDC62; the interaction requires estradiol and appears to enhance the transcription of target genes. Interacts with NR2C1; the interaction prevents homodimerization of ESR1 and suppresses its transcriptional activity and cell growth. Interacts with DNAAF4. Interacts with PRMT2. Interacts with PI3KR1 or PIK3R2, SRC and PTK2/FAK1. Interacts with RBFOX2. Interacts with EP300; the interaction is estrogen-dependent and enhanced by CITED1. Interacts with CITED1; the interaction is estrogen-dependent. Interacts with FAM120B, FOXL2, PHB2 and SLC30A9. Interacts with coactivators NCOA3 and NCOA6. Interacts with STK3/MST2 only in the presence of SAV1 and vice-versa. Binds to CSNK1D. Interacts with NCOA2; NCOA2 can interact with ESR1 AF-1 and AF-2 domains simultaneously and mediate their transcriptional synergy. Interacts with DDX5. Interacts with NCOA1; the interaction seems to require a self-association of N-terminal and C-terminal regions. Interacts with ZNF366, DDX17, NFKB1, RELA, SP1 and SP3. Interacts with NRIP1. Interacts with GPER1; the interaction occurs in an estrogen-dependent manner. Interacts with CLOCK and the interaction is stimulated by estrogen. Interacts with TRIP4 (ufmylated); estrogen dependent. Interacts with LMTK3; the interaction phosphorylates ESR1 (in vitro) and protects it against proteasomal degradation. Interacts with CCAR2 (via N-terminus) in a ligand-independent manner. Interacts with ZFHX3. Interacts with SFR1 in a ligand-dependent and -independent manner. Interacts with DCAF13, LATS1 and DCAF1; regulates ESR1 ubiquitination and ubiquitin-mediated proteasomal degradation. Interacts (via DNA-binding domain) with POU4F2 (C-terminus); this interaction increases the estrogen receptor ESR1 transcriptional activity in a DNA- and ligand 17-beta-estradiol-independent manner. Interacts with ESRRB isoform 1. Interacts with UBE3A and WBP2. Interacts with GTF2B. Interacts with RBM39. In the absence of hormonal ligand, interacts with TACC1. Interacts with BAG1; the interaction is promoted in the absence of estradiol (17-beta-estradiol/E2). Interacts with and ubiquitinated by STUB1; the interaction is promoted in the absence of estradiol (17-beta-estradiol/E2). Interacts with NEDD8. Post-translationally, ubiquitinated; regulated by LATS1 via DCAF1 it leads to ESR1 proteasomal degradation. Deubiquitinated by OTUB1. Ubiquitinated by STUB1/CHIP; in the CA1 hippocampal region following loss of endogenous circulating estradiol (17-beta-estradiol/E2). Ubiquitinated by UBR5, leading to its degradation: UBR5 specifically recognizes and binds ligand-bound ESR1 when it is not associated with coactivators (NCOAs). In presence of NCOAs, the UBR5-degron is not accessible, preventing its ubiquitination and degradation. Palmitoylated at Cys-45 by ZDHHC7 and ZDHHC21. Palmitoylation is required for plasma membrane targeting and for rapid intracellular signaling via ERK and AKT kinases and cAMP generation, but not for signaling mediated by the nuclear hormone receptor. In terms of processing, phosphorylated by cyclin A/CDK2 and CK1. Phosphorylation probably enhances transcriptional activity. Dephosphorylation by PPP5C inhibits its transactivation activity. Phosphorylated by LMTK3 (in vitro). Post-translationally, dimethylated by PRMT1. Demethylated by JMJD6.

It localises to the nucleus. It is found in the cytoplasm. Its subcellular location is the golgi apparatus. The protein localises to the cell membrane. Its function is as follows. Nuclear hormone receptor. The steroid hormones and their receptors are involved in the regulation of eukaryotic gene expression and affect cellular proliferation and differentiation in target tissues. Ligand-dependent nuclear transactivation involves either direct homodimer binding to a palindromic estrogen response element (ERE) sequence or association with other DNA-binding transcription factors, such as AP-1/c-Jun, c-Fos, ATF-2, Sp1 and Sp3, to mediate ERE-independent signaling. Ligand binding induces a conformational change allowing subsequent or combinatorial association with multiprotein coactivator complexes through LXXLL motifs of their respective components. Mutual transrepression occurs between the estrogen receptor (ER) and NF-kappa-B in a cell-type specific manner. Decreases NF-kappa-B DNA-binding activity and inhibits NF-kappa-B-mediated transcription from the IL6 promoter and displace RELA/p65 and associated coregulators from the promoter. Recruited to the NF-kappa-B response element of the CCL2 and IL8 promoters and can displace CREBBP. Present with NF-kappa-B components RELA/p65 and NFKB1/p50 on ERE sequences. Can also act synergistically with NF-kappa-B to activate transcription involving respective recruitment adjacent response elements; the function involves CREBBP. Can activate the transcriptional activity of TFF1. Also mediates membrane-initiated estrogen signaling involving various kinase cascades. Essential for MTA1-mediated transcriptional regulation of BRCA1 and BCAS3. Maintains neuronal survival in response to ischemic reperfusion injury when in the presence of circulating estradiol (17-beta-estradiol/E2). This Macaca mulatta (Rhesus macaque) protein is Estrogen receptor (ESR1).